Consider the following 205-residue polypeptide: MAVVDIKNMNGETVSQAELPDSIFDVEVKSSVLHEVVKMQLARRRSGTASTKGRSDVAGSRAKLFRQKGTGRARRGDVKSPLLKGGGVVFGPHPRSFDYSVPKKVRKLALKMALTSKLRDNTLTVVDQFRFDRIKTKDFVGAINALGAANALVISDGSETLEKSARNVPKVKVLKCEGLNVYDILKYKNLVLPEAAIKMIEGRLL.

The interval 43 to 77 is disordered; the sequence is RRRSGTASTKGRSDVAGSRAKLFRQKGTGRARRGD. Positions 63–73 are enriched in basic residues; it reads KLFRQKGTGRA.

It belongs to the universal ribosomal protein uL4 family. In terms of assembly, part of the 50S ribosomal subunit.

In terms of biological role, one of the primary rRNA binding proteins, this protein initially binds near the 5'-end of the 23S rRNA. It is important during the early stages of 50S assembly. It makes multiple contacts with different domains of the 23S rRNA in the assembled 50S subunit and ribosome. Functionally, forms part of the polypeptide exit tunnel. The sequence is that of Large ribosomal subunit protein uL4 from Desulfosudis oleivorans (strain DSM 6200 / JCM 39069 / Hxd3) (Desulfococcus oleovorans).